The sequence spans 688 residues: DNA ligase (688 aa).

Residues 51 to 55 (DSEYD), 100 to 101 (SL), and Glu-129 contribute to the NAD(+) site. Residue Lys-131 is the N6-AMP-lysine intermediate of the active site. NAD(+) is bound by residues Arg-152, Glu-189, Lys-308, and Lys-332. The Zn(2+) site is built by Cys-426, Cys-429, Cys-444, and Cys-450. Residues 609–688 (ADEQPLKGQT…DELLALLANS (80 aa)) form the BRCT domain.

The protein belongs to the NAD-dependent DNA ligase family. LigA subfamily. The cofactor is Mg(2+). Mn(2+) serves as cofactor.

The enzyme catalyses NAD(+) + (deoxyribonucleotide)n-3'-hydroxyl + 5'-phospho-(deoxyribonucleotide)m = (deoxyribonucleotide)n+m + AMP + beta-nicotinamide D-nucleotide.. Functionally, DNA ligase that catalyzes the formation of phosphodiester linkages between 5'-phosphoryl and 3'-hydroxyl groups in double-stranded DNA using NAD as a coenzyme and as the energy source for the reaction. It is essential for DNA replication and repair of damaged DNA. In Shewanella sp. (strain MR-7), this protein is DNA ligase.